The primary structure comprises 71 residues: Small ribosomal subunit protein bS18 (71 aa).

The protein belongs to the bacterial ribosomal protein bS18 family. As to quaternary structure, part of the 30S ribosomal subunit. Forms a tight heterodimer with protein bS6.

In terms of biological role, binds as a heterodimer with protein bS6 to the central domain of the 16S rRNA, where it helps stabilize the platform of the 30S subunit. The protein is Small ribosomal subunit protein bS18 of Nostoc sp. (strain PCC 7120 / SAG 25.82 / UTEX 2576).